A 145-amino-acid polypeptide reads, in one-letter code: Hemoglobin subunit beta-2 (145 aa).

Positions 2–145 (HLTDQEIKYI…VADAVGKGYH (144 aa)) constitute a Globin domain. The heme b site is built by histidine 63 and histidine 91.

Belongs to the globin family. As to expression, red blood cells.

The chain is Hemoglobin subunit beta-2 from Telmatobius peruvianus (Andean frog).